A 97-amino-acid polypeptide reads, in one-letter code: Integration host factor subunit alpha (97 aa).

It belongs to the bacterial histone-like protein family. Heterodimer of an alpha and a beta chain.

Its function is as follows. This protein is one of the two subunits of integration host factor, a specific DNA-binding protein that functions in genetic recombination as well as in transcriptional and translational control. The polypeptide is Integration host factor subunit alpha (Hydrogenovibrio crunogenus (strain DSM 25203 / XCL-2) (Thiomicrospira crunogena)).